The following is a 123-amino-acid chain: uncharacterized protein (123 aa).

Helical transmembrane passes span 53–73 (VWFL…FFFL) and 75–95 (VLWF…VFSH).

The protein localises to the membrane. This is an uncharacterized protein from Saccharomyces cerevisiae (strain ATCC 204508 / S288c) (Baker's yeast).